Reading from the N-terminus, the 536-residue chain is Peptide chain release factor 3 (536 aa).

A tr-type G domain is found at Ser13–Gln281. GTP is bound by residues Ser22–Thr29, Asp90–His94, and Asn144–Asp147.

This sequence belongs to the TRAFAC class translation factor GTPase superfamily. Classic translation factor GTPase family. PrfC subfamily.

The protein localises to the cytoplasm. Functionally, increases the formation of ribosomal termination complexes and stimulates activities of RF-1 and RF-2. It binds guanine nucleotides and has strong preference for UGA stop codons. It may interact directly with the ribosome. The stimulation of RF-1 and RF-2 is significantly reduced by GTP and GDP, but not by GMP. The chain is Peptide chain release factor 3 from Chromobacterium violaceum (strain ATCC 12472 / DSM 30191 / JCM 1249 / CCUG 213 / NBRC 12614 / NCIMB 9131 / NCTC 9757 / MK).